A 156-amino-acid chain; its full sequence is ATP synthase subunit b (156 aa).

A helical membrane pass occupies residues Leu7–Leu29.

This sequence belongs to the ATPase B chain family. F-type ATPases have 2 components, F(1) - the catalytic core - and F(0) - the membrane proton channel. F(1) has five subunits: alpha(3), beta(3), gamma(1), delta(1), epsilon(1). F(0) has three main subunits: a(1), b(2) and c(10-14). The alpha and beta chains form an alternating ring which encloses part of the gamma chain. F(1) is attached to F(0) by a central stalk formed by the gamma and epsilon chains, while a peripheral stalk is formed by the delta and b chains.

The protein localises to the cell inner membrane. In terms of biological role, f(1)F(0) ATP synthase produces ATP from ADP in the presence of a proton or sodium gradient. F-type ATPases consist of two structural domains, F(1) containing the extramembraneous catalytic core and F(0) containing the membrane proton channel, linked together by a central stalk and a peripheral stalk. During catalysis, ATP synthesis in the catalytic domain of F(1) is coupled via a rotary mechanism of the central stalk subunits to proton translocation. Functionally, component of the F(0) channel, it forms part of the peripheral stalk, linking F(1) to F(0). In Vibrio alginolyticus, this protein is ATP synthase subunit b.